The following is a 356-amino-acid chain: DNA polymerase IV (356 aa).

Positions 1–188 (MDTSRKIIHI…IPVTKFYGVG (188 aa)) constitute a UmuC domain. Residues aspartate 11 and aspartate 106 each coordinate Mg(2+). Glutamate 107 is an active-site residue.

It belongs to the DNA polymerase type-Y family. Monomer. It depends on Mg(2+) as a cofactor.

It localises to the cytoplasm. It carries out the reaction DNA(n) + a 2'-deoxyribonucleoside 5'-triphosphate = DNA(n+1) + diphosphate. Its function is as follows. Poorly processive, error-prone DNA polymerase involved in untargeted mutagenesis. Copies undamaged DNA at stalled replication forks, which arise in vivo from mismatched or misaligned primer ends. These misaligned primers can be extended by PolIV. Exhibits no 3'-5' exonuclease (proofreading) activity. May be involved in translesional synthesis, in conjunction with the beta clamp from PolIII. The sequence is that of DNA polymerase IV from Listeria monocytogenes serotype 4b (strain F2365).